Consider the following 222-residue polypeptide: Glutathione S-transferase alpha-1 (222 aa).

An N-acetylmethionine modification is found at Met-1. Positions 3–83 (GKPVLHYFNA…YIATKYDLYG (81 aa)) constitute a GST N-terminal domain. Position 4 is an N6-succinyllysine (Lys-4). Glutathione-binding positions include Tyr-9, Lys-45, 54-55 (QV), and 67-68 (QT). One can recognise a GST C-terminal domain in the interval 85–208 (DMKERALIDM…QPGSQRKLPV (124 aa)).

This sequence belongs to the GST superfamily. Alpha family. As to quaternary structure, homodimer. Homodimer or heterodimer of GSTA1 and GSTA2.

The protein localises to the cytoplasm. The enzyme catalyses RX + glutathione = an S-substituted glutathione + a halide anion + H(+). The catalysed reaction is prostaglandin A2 + glutathione = prostaglandin A2-S-(R)-glutathione. It catalyses the reaction prostaglandin J2 + glutathione = prostaglandin J2-S-(R)-glutathione. It carries out the reaction (13S)-hydroperoxy-(9Z,11E)-octadecadienoate + 2 glutathione = (13S)-hydroxy-(9Z,11E)-octadecadienoate + glutathione disulfide + H2O. The enzyme catalyses androst-5-ene-3,17-dione = androst-4-ene-3,17-dione. Glutathione S-transferase that catalyzes the nucleophilic attack of the sulfur atom of glutathione on the electrophilic groups of a wide range of exogenous and endogenous compounds. Involved in the formation of glutathione conjugates of both prostaglandin A2 (PGA2) and prostaglandin J2 (PGJ2). It also catalyzes the isomerization of D5-androstene-3,17-dione (AD) into D4-androstene-3,17-dione and may therefore play an important role in hormone biosynthesis. Through its glutathione-dependent peroxidase activity toward the fatty acid hydroperoxide (13S)-hydroperoxy-(9Z,11E)-octadecadienoate/13-HPODE it is also involved in the metabolism of oxidized linoleic acid. The polypeptide is Glutathione S-transferase alpha-1 (Gsta1) (Rattus norvegicus (Rat)).